Reading from the N-terminus, the 191-residue chain is Protein GrpE (191 aa).

A compositionally biased stretch (basic and acidic residues) spans 1–15; it reads MGKEEKNNIEDKALD. A disordered region spans residues 1 to 35; sequence MGKEEKNNIEDKALDNEQEMDQESTSKAVEELSIE.

The protein belongs to the GrpE family. As to quaternary structure, homodimer.

It localises to the cytoplasm. Its function is as follows. Participates actively in the response to hyperosmotic and heat shock by preventing the aggregation of stress-denatured proteins, in association with DnaK and GrpE. It is the nucleotide exchange factor for DnaK and may function as a thermosensor. Unfolded proteins bind initially to DnaJ; upon interaction with the DnaJ-bound protein, DnaK hydrolyzes its bound ATP, resulting in the formation of a stable complex. GrpE releases ADP from DnaK; ATP binding to DnaK triggers the release of the substrate protein, thus completing the reaction cycle. Several rounds of ATP-dependent interactions between DnaJ, DnaK and GrpE are required for fully efficient folding. This Francisella philomiragia subsp. philomiragia (strain ATCC 25017 / CCUG 19701 / FSC 153 / O#319-036) protein is Protein GrpE.